Reading from the N-terminus, the 787-residue chain is Replication origin-binding protein (787 aa).

A Helicase ATP-binding domain is found at 39 to 195 (HFKTFSEQIK…SLCMPHFKSA (157 aa)). 52–59 (APMGSGKT) contributes to the ATP binding site.

Belongs to the herpesviridae OriBP family.

Functionally, probably involved in DNA replication. Binds the origin of replication (ori). In Human herpesvirus 7 (strain JI) (HHV-7), this protein is Replication origin-binding protein (U73).